Consider the following 333-residue polypeptide: D-fructose 1,6-bisphosphatase class 2/sedoheptulose 1,7-bisphosphatase (333 aa).

Mn(2+)-binding residues include Asp-33, Glu-57, Asp-85, and Glu-88. Substrate is bound by residues 88 to 90 (EGT), Tyr-119, 164 to 166 (RTR), and 186 to 188 (DGD). Glu-213 is a binding site for Mn(2+).

It belongs to the FBPase class 2 family. In terms of assembly, homotetramer. It depends on Mn(2+) as a cofactor.

It carries out the reaction beta-D-fructose 1,6-bisphosphate + H2O = beta-D-fructose 6-phosphate + phosphate. The catalysed reaction is D-sedoheptulose 1,7-bisphosphate + H2O = D-sedoheptulose 7-phosphate + phosphate. It functions in the pathway carbohydrate biosynthesis; Calvin cycle. Functionally, catalyzes the hydrolysis of fructose 1,6-bisphosphate (Fru 1,6-P2) and sedoheptulose 1,7-bisphosphate (Sed 1,7-P2) to fructose 6-phosphate and sedoheptulose 7-phosphate, respectively. The protein is D-fructose 1,6-bisphosphatase class 2/sedoheptulose 1,7-bisphosphatase of Prochlorococcus marinus (strain MIT 9301).